We begin with the raw amino-acid sequence, 446 residues long: Protein odr-4 homolog (446 aa).

2 helical membrane passes run 81–101 and 424–444; these read MLPGGLLVLSVFIIATPELSK and MGVVIAVAVAVFASIFSFNYF.

This sequence belongs to the ODR-4 family.

It localises to the membrane. Its function is as follows. May play a role in the trafficking of a subset of G-protein coupled receptors. The polypeptide is Protein odr-4 homolog (ODR4) (Gallus gallus (Chicken)).